The chain runs to 179 residues: Large ribosomal subunit protein uL5 (179 aa).

The protein belongs to the universal ribosomal protein uL5 family. As to quaternary structure, part of the 50S ribosomal subunit; part of the 5S rRNA/L5/L18/L25 subcomplex. Contacts the 5S rRNA and the P site tRNA. Forms a bridge to the 30S subunit in the 70S ribosome.

This is one of the proteins that bind and probably mediate the attachment of the 5S RNA into the large ribosomal subunit, where it forms part of the central protuberance. In the 70S ribosome it contacts protein S13 of the 30S subunit (bridge B1b), connecting the 2 subunits; this bridge is implicated in subunit movement. Contacts the P site tRNA; the 5S rRNA and some of its associated proteins might help stabilize positioning of ribosome-bound tRNAs. This is Large ribosomal subunit protein uL5 from Clostridium novyi (strain NT).